Consider the following 635-residue polypeptide: MINISFPDGSIKQFAKNITAYEVANAISMSLAKAAMVAEINGELQDLSIVIDNDCKFRILTAKDPECLEIIRHDAAHLTAEAVKELFPETQVTIGPAIENGYYYDFARDKPFTNDDLAVIEAKMQELSQKNEQVTRELWDRDKAVEFFKSIGEHYKAEIIASIPAGEPITLYRQGNFIDLCRGPHSPSTGVVKHFKLMKVAGAYWRGDSRNEMLQRIYGTAWATKEQLDSYLLMLEEAEKRDHRKLGRELDLFHFQEEAQGMVFWHDKGWSIYNTIEQYIRKKIRKNGYTEVKTPVLVDKSLWEASGHWEKFRDDMFALETDDKTLALKPMNCPCHVQIFKQGIKSYRDLPLRMSEFGLCHRNEASGALHGLMRVRSLVQDDAHIFCAAEQITDETVSFCKLLTEVYKDFGFTDIKVKFSDRPEIRAGSNEVWDKAENALKEAVEQAGFTYTLNPGEGAFYGPKLEFVLTDAIGRQWQCGTLQMDFVLPERLDASYVAASGEKKRPVMLHRAILGSLERFIGILIEEYAGRFPLWLAPVQVAIATITSDLNDYALEVQKALIDNGVRTDFNISPDKINYKIREFSNQKIPMIAVIGKQEQENKQVAIRRLGTTDQEVLSVEQLIAVVKEENEKYL.

The TGS domain occupies 1–61 (MINISFPDGS…DNDCKFRILT (61 aa)). The tract at residues 242-533 (DHRKLGRELD…LIEEYAGRFP (292 aa)) is catalytic. Residues Cys333, His384, and His510 each contribute to the Zn(2+) site.

Belongs to the class-II aminoacyl-tRNA synthetase family. Homodimer. Zn(2+) serves as cofactor.

The protein localises to the cytoplasm. It catalyses the reaction tRNA(Thr) + L-threonine + ATP = L-threonyl-tRNA(Thr) + AMP + diphosphate + H(+). Its function is as follows. Catalyzes the attachment of threonine to tRNA(Thr) in a two-step reaction: L-threonine is first activated by ATP to form Thr-AMP and then transferred to the acceptor end of tRNA(Thr). Also edits incorrectly charged L-seryl-tRNA(Thr). The protein is Threonine--tRNA ligase of Rickettsia rickettsii (strain Sheila Smith).